The following is a 361-amino-acid chain: Phosphoserine aminotransferase (361 aa).

Residue Arg-43 participates in L-glutamate binding. Residues 77-78, Trp-103, Thr-152, Asp-172, and Gln-195 contribute to the pyridoxal 5'-phosphate site; that span reads AS. Position 196 is an N6-(pyridoxal phosphate)lysine (Lys-196). A pyridoxal 5'-phosphate-binding site is contributed by 237–238; it reads NT.

This sequence belongs to the class-V pyridoxal-phosphate-dependent aminotransferase family. SerC subfamily. Homodimer. It depends on pyridoxal 5'-phosphate as a cofactor.

The protein resides in the cytoplasm. The enzyme catalyses O-phospho-L-serine + 2-oxoglutarate = 3-phosphooxypyruvate + L-glutamate. The catalysed reaction is 4-(phosphooxy)-L-threonine + 2-oxoglutarate = (R)-3-hydroxy-2-oxo-4-phosphooxybutanoate + L-glutamate. It participates in amino-acid biosynthesis; L-serine biosynthesis; L-serine from 3-phospho-D-glycerate: step 2/3. The protein operates within cofactor biosynthesis; pyridoxine 5'-phosphate biosynthesis; pyridoxine 5'-phosphate from D-erythrose 4-phosphate: step 3/5. Its function is as follows. Catalyzes the reversible conversion of 3-phosphohydroxypyruvate to phosphoserine and of 3-hydroxy-2-oxo-4-phosphonooxybutanoate to phosphohydroxythreonine. This chain is Phosphoserine aminotransferase, found in Desulfosudis oleivorans (strain DSM 6200 / JCM 39069 / Hxd3) (Desulfococcus oleovorans).